The primary structure comprises 95 residues: Aspartyl/glutamyl-tRNA(Asn/Gln) amidotransferase subunit C (95 aa).

The protein belongs to the GatC family. Heterotrimer of A, B and C subunits.

The enzyme catalyses L-glutamyl-tRNA(Gln) + L-glutamine + ATP + H2O = L-glutaminyl-tRNA(Gln) + L-glutamate + ADP + phosphate + H(+). It catalyses the reaction L-aspartyl-tRNA(Asn) + L-glutamine + ATP + H2O = L-asparaginyl-tRNA(Asn) + L-glutamate + ADP + phosphate + 2 H(+). In terms of biological role, allows the formation of correctly charged Asn-tRNA(Asn) or Gln-tRNA(Gln) through the transamidation of misacylated Asp-tRNA(Asn) or Glu-tRNA(Gln) in organisms which lack either or both of asparaginyl-tRNA or glutaminyl-tRNA synthetases. The reaction takes place in the presence of glutamine and ATP through an activated phospho-Asp-tRNA(Asn) or phospho-Glu-tRNA(Gln). This chain is Aspartyl/glutamyl-tRNA(Asn/Gln) amidotransferase subunit C, found in Bartonella henselae (strain ATCC 49882 / DSM 28221 / CCUG 30454 / Houston 1) (Rochalimaea henselae).